A 217-amino-acid chain; its full sequence is Thiamine-phosphate synthase (217 aa).

4-amino-2-methyl-5-(diphosphooxymethyl)pyrimidine is bound by residues 39–43 (QYRDK) and Asn-71. Asp-72 and Asp-91 together coordinate Mg(2+). A 4-amino-2-methyl-5-(diphosphooxymethyl)pyrimidine-binding site is contributed by Thr-110. 2-[(2R,5Z)-2-carboxy-4-methylthiazol-5(2H)-ylidene]ethyl phosphate is bound at residue 137–139 (SNT). Lys-140 is a 4-amino-2-methyl-5-(diphosphooxymethyl)pyrimidine binding site. Gly-167 lines the 2-[(2R,5Z)-2-carboxy-4-methylthiazol-5(2H)-ylidene]ethyl phosphate pocket.

It belongs to the thiamine-phosphate synthase family. Requires Mg(2+) as cofactor.

The catalysed reaction is 2-[(2R,5Z)-2-carboxy-4-methylthiazol-5(2H)-ylidene]ethyl phosphate + 4-amino-2-methyl-5-(diphosphooxymethyl)pyrimidine + 2 H(+) = thiamine phosphate + CO2 + diphosphate. It carries out the reaction 2-(2-carboxy-4-methylthiazol-5-yl)ethyl phosphate + 4-amino-2-methyl-5-(diphosphooxymethyl)pyrimidine + 2 H(+) = thiamine phosphate + CO2 + diphosphate. It catalyses the reaction 4-methyl-5-(2-phosphooxyethyl)-thiazole + 4-amino-2-methyl-5-(diphosphooxymethyl)pyrimidine + H(+) = thiamine phosphate + diphosphate. Its pathway is cofactor biosynthesis; thiamine diphosphate biosynthesis; thiamine phosphate from 4-amino-2-methyl-5-diphosphomethylpyrimidine and 4-methyl-5-(2-phosphoethyl)-thiazole: step 1/1. Functionally, condenses 4-methyl-5-(beta-hydroxyethyl)thiazole monophosphate (THZ-P) and 2-methyl-4-amino-5-hydroxymethyl pyrimidine pyrophosphate (HMP-PP) to form thiamine monophosphate (TMP). In Saccharophagus degradans (strain 2-40 / ATCC 43961 / DSM 17024), this protein is Thiamine-phosphate synthase.